An 83-amino-acid polypeptide reads, in one-letter code: Cell division protein ZapB (83 aa).

Residues 7-80 adopt a coiled-coil conformation; it reads EMLEKLEAKV…RVRTLLGKMD (74 aa).

This sequence belongs to the ZapB family. As to quaternary structure, homodimer. The ends of the coiled-coil dimer bind to each other, forming polymers. Interacts with FtsZ.

The protein resides in the cytoplasm. In terms of biological role, non-essential, abundant cell division factor that is required for proper Z-ring formation. It is recruited early to the divisome by direct interaction with FtsZ, stimulating Z-ring assembly and thereby promoting cell division earlier in the cell cycle. Its recruitment to the Z-ring requires functional FtsA or ZipA. The protein is Cell division protein ZapB of Photobacterium profundum (strain SS9).